The primary structure comprises 214 residues: Holliday junction branch migration complex subunit RuvA (214 aa).

The domain I stretch occupies residues 1 to 67; sequence MVGWLKGLIV…ADNWQFFGFK (67 aa). The segment at 68–146 is domain II; that stretch reads STQERDIFRE…AFAGMDPAPS (79 aa). Residues 147 to 154 are flexible linker; that stretch reads LAEGVSSE. The tract at residues 155 to 214 is domain III; the sequence is QMPESGADVEATLSMLGYDDLEVRRAIRAIAEGSDGPPPPGDDQDAWLRGCLQWLSRDSA.

This sequence belongs to the RuvA family. Homotetramer. Forms an RuvA(8)-RuvB(12)-Holliday junction (HJ) complex. HJ DNA is sandwiched between 2 RuvA tetramers; dsDNA enters through RuvA and exits via RuvB. An RuvB hexamer assembles on each DNA strand where it exits the tetramer. Each RuvB hexamer is contacted by two RuvA subunits (via domain III) on 2 adjacent RuvB subunits; this complex drives branch migration. In the full resolvosome a probable DNA-RuvA(4)-RuvB(12)-RuvC(2) complex forms which resolves the HJ.

The protein localises to the cytoplasm. In terms of biological role, the RuvA-RuvB-RuvC complex processes Holliday junction (HJ) DNA during genetic recombination and DNA repair, while the RuvA-RuvB complex plays an important role in the rescue of blocked DNA replication forks via replication fork reversal (RFR). RuvA specifically binds to HJ cruciform DNA, conferring on it an open structure. The RuvB hexamer acts as an ATP-dependent pump, pulling dsDNA into and through the RuvAB complex. HJ branch migration allows RuvC to scan DNA until it finds its consensus sequence, where it cleaves and resolves the cruciform DNA. The protein is Holliday junction branch migration complex subunit RuvA of Synechococcus sp. (strain CC9605).